Here is a 256-residue protein sequence, read N- to C-terminus: MAFSAEDVLKEYDRRRRMEALLLSLYYPNDRKLLDYKEWSPPRVQVECPKAPVEWNNPPSEKGLIVGHFSGIKYKGEKAQASEVDVNKMCCWVSKFKDAMRRYQGIQTCKIPGKVLSDLDAKIKAYNLTVEGVEGFVRYSRVTKQHVAAFLKELRHSKQYENVNLIHYILTDKRVDIQHLEKDLVKDFKALVESAHRMRQGHMINVKYILYQLLKKHGHGPDGPDILTVKTGSKGVLYDDSFRKIYTDLGWKFTPL.

Its function is as follows. Transcription activation. This is Putative transcription factor 001R from Frog virus 3 (isolate Goorha) (FV-3).